The sequence spans 298 residues: ATP synthase gamma chain (298 aa).

Belongs to the ATPase gamma chain family. F-type ATPases have 2 components, CF(1) - the catalytic core - and CF(0) - the membrane proton channel. CF(1) has five subunits: alpha(3), beta(3), gamma(1), delta(1), epsilon(1). CF(0) has three main subunits: a, b and c.

It localises to the cell inner membrane. Produces ATP from ADP in the presence of a proton gradient across the membrane. The gamma chain is believed to be important in regulating ATPase activity and the flow of protons through the CF(0) complex. The sequence is that of ATP synthase gamma chain from Francisella philomiragia subsp. philomiragia (strain ATCC 25017 / CCUG 19701 / FSC 153 / O#319-036).